A 431-amino-acid polypeptide reads, in one-letter code: Glucose-1-phosphate adenylyltransferase (431 aa).

Residue Lys39 coordinates beta-D-fructose 1,6-bisphosphate. Positions 40, 46, and 52 each coordinate AMP. Tyr114 is a binding site for alpha-D-glucose 1-phosphate. Arg130 is a binding site for AMP. Alpha-D-glucose 1-phosphate-binding positions include Gly179, 194–195 (EK), and Ser212. The AMP site is built by Glu370 and Arg386. Residues 419-423 (REMLR) and 429-431 (QER) contribute to the beta-D-fructose 1,6-bisphosphate site.

It belongs to the bacterial/plant glucose-1-phosphate adenylyltransferase family. Homotetramer.

It catalyses the reaction alpha-D-glucose 1-phosphate + ATP + H(+) = ADP-alpha-D-glucose + diphosphate. It participates in glycan biosynthesis; glycogen biosynthesis. Its activity is regulated as follows. Allosterically activated by fructose-1,6-bisphosphate (F16BP) and inhibited by AMP. Its function is as follows. Involved in the biosynthesis of ADP-glucose, a building block required for the elongation reactions to produce glycogen. Catalyzes the reaction between ATP and alpha-D-glucose 1-phosphate (G1P) to produce pyrophosphate and ADP-Glc. The sequence is that of Glucose-1-phosphate adenylyltransferase from Salmonella paratyphi A (strain ATCC 9150 / SARB42).